The following is a 715-amino-acid chain: Glycine--tRNA ligase beta subunit (715 aa).

This sequence belongs to the class-II aminoacyl-tRNA synthetase family. Tetramer of two alpha and two beta subunits.

It is found in the cytoplasm. It catalyses the reaction tRNA(Gly) + glycine + ATP = glycyl-tRNA(Gly) + AMP + diphosphate. The polypeptide is Glycine--tRNA ligase beta subunit (Nitrosomonas europaea (strain ATCC 19718 / CIP 103999 / KCTC 2705 / NBRC 14298)).